The following is a 332-amino-acid chain: Aspartate carbamoyltransferase catalytic subunit (332 aa).

Carbamoyl phosphate-binding residues include arginine 54 and threonine 55. An L-aspartate-binding site is contributed by lysine 82. Carbamoyl phosphate contacts are provided by arginine 104, histidine 134, and glutamine 137. Residues arginine 175 and arginine 230 each coordinate L-aspartate. Positions 271 and 272 each coordinate carbamoyl phosphate. The segment at 312–332 (GGPDGDSTTSPGSGPEGGTTP) is disordered.

This sequence belongs to the aspartate/ornithine carbamoyltransferase superfamily. ATCase family. Heterododecamer (2C3:3R2) of six catalytic PyrB chains organized as two trimers (C3), and six regulatory PyrI chains organized as three dimers (R2).

The catalysed reaction is carbamoyl phosphate + L-aspartate = N-carbamoyl-L-aspartate + phosphate + H(+). Its pathway is pyrimidine metabolism; UMP biosynthesis via de novo pathway; (S)-dihydroorotate from bicarbonate: step 2/3. Its function is as follows. Catalyzes the condensation of carbamoyl phosphate and aspartate to form carbamoyl aspartate and inorganic phosphate, the committed step in the de novo pyrimidine nucleotide biosynthesis pathway. The chain is Aspartate carbamoyltransferase catalytic subunit from Beutenbergia cavernae (strain ATCC BAA-8 / DSM 12333 / CCUG 43141 / JCM 11478 / NBRC 16432 / NCIMB 13614 / HKI 0122).